A 246-amino-acid chain; its full sequence is Flagellar L-ring protein (246 aa).

An N-terminal signal peptide occupies residues 1–20 (MMQKCLSPKTLIAALVVLSA). Residue Cys21 is the site of N-palmitoyl cysteine attachment. Cys21 is lipidated: S-diacylglycerol cysteine.

This sequence belongs to the FlgH family. As to quaternary structure, the basal body constitutes a major portion of the flagellar organelle and consists of four rings (L,P,S, and M) mounted on a central rod.

The protein localises to the cell outer membrane. The protein resides in the bacterial flagellum basal body. Its function is as follows. Assembles around the rod to form the L-ring and probably protects the motor/basal body from shearing forces during rotation. The protein is Flagellar L-ring protein of Ruegeria pomeroyi (strain ATCC 700808 / DSM 15171 / DSS-3) (Silicibacter pomeroyi).